A 782-amino-acid polypeptide reads, in one-letter code: MEHKLATAEKKLLVDLVKLVQKRGLEGENGGWKEFLNVYDKKLGSSLSDPARRSNDVLVAFLLTFKKKEDLQLIARVMQCGANRELIEKFKQETPDKETPEQRLVRLTITHDDYPGNYTFPSYAEDWYVTELGKKKSKVIKSTRMLSIDCEMVTCEDGSQALVRVGAVDRDLKVVLDKFVKPDKPVIDYKTDITGVTAEDLERATLSVADIQKKLRRFLSVGTILVGHGLHNDLQVLRIDHARVIDTSYVFEFVDAPKTQRPSLNNLCKSVLGQEVRMDGAAHNCVHDAAAAMKLVLAAVEKGAATLIQPTEEMMVAEKRRQEARQEAGKAQLFLHKIPHDVPSEELHGVLSGNFTLVVKPPKTGGYSTAVVDFSSPEEANEAFENVEGDVAKDKSGLPQKKAVLKLSSGLAVSLFVRKMVQDDSPCEISTSERARAEENNVSSKRQKTEDETEETKEATVNQREADKTKLFLHKIPHDVPSQELHGVLNGDFTLDVKPPKRKGGYYNAVVDFNSPEEANEAFENVEGDVVKDKTGLPQKMVVFKLSSGSGVSLYVRKMVHDDSPGEISTTKRARTEESNMSSKRQKTEDESEETKEANAKQREADKTKLLLHKIPLNVPSQELKVVITGQFTLEVMPPKRKGRYYNAVVTFNSPEEANKAFEKVKGEAVKEKGGLAQKMVAFKLSSGSGACLYVRKMVQDESEETKEANANHCEDDHLKEMEELKEKLKAMEFAISCEGHSKEIEELKQKLNAKEHQIQAQDKIIANLKMKLEKKQSKSRS.

The region spanning 145–296 (MLSIDCEMVT…HDAAAAMKLV (152 aa)) is the Exonuclease domain. An RRM 1 domain is found at 331–410 (AQLFLHKIPH…KKAVLKLSSG (80 aa)). A disordered region spans residues 426-464 (PCEISTSERARAEENNVSSKRQKTEDETEETKEATVNQR). The region spanning 469–549 (TKLFLHKIPH…KMVVFKLSSG (81 aa)) is the RRM 2 domain. Positions 563–605 (DSPGEISTTKRARTEESNMSSKRQKTEDESEETKEANAKQREA) are disordered. Positions 577–605 (EESNMSSKRQKTEDESEETKEANAKQREA) form a coiled coil. Over residues 595 to 605 (TKEANAKQREA) the composition is skewed to basic and acidic residues. The 81-residue stretch at 608-688 (TKLLLHKIPL…KMVAFKLSSG (81 aa)) folds into the RRM 3 domain. Residues 709 to 779 (ANANHCEDDH…KMKLEKKQSK (71 aa)) adopt a coiled-coil conformation.

This sequence belongs to the REXO1/REXO3 family. Associated with the Mediator complex.

It is found in the nucleus. Functionally, 3'-5' exonuclease degrading single-stranded small RNAs. In Arabidopsis thaliana (Mouse-ear cress), this protein is Small RNA degrading nuclease 3 (SDN3).